Here is a 279-residue protein sequence, read N- to C-terminus: Energy-coupling factor transporter ATP-binding protein EcfA1 (279 aa).

In terms of domain architecture, ABC transporter spans 5–240 (IELKKVTFNY…GDELLQLGLD (236 aa)). 40 to 47 (GHNGSGKS) contributes to the ATP binding site.

The protein belongs to the ABC transporter superfamily. Energy-coupling factor EcfA family. Forms a stable energy-coupling factor (ECF) transporter complex composed of 2 membrane-embedded substrate-binding proteins (S component), 2 ATP-binding proteins (A component) and 2 transmembrane proteins (T component).

It localises to the cell membrane. In terms of biological role, ATP-binding (A) component of a common energy-coupling factor (ECF) ABC-transporter complex. Unlike classic ABC transporters this ECF transporter provides the energy necessary to transport a number of different substrates. This is Energy-coupling factor transporter ATP-binding protein EcfA1 from Streptococcus pyogenes serotype M28 (strain MGAS6180).